A 139-amino-acid chain; its full sequence is Large ribosomal subunit protein uL16 (139 aa).

The protein belongs to the universal ribosomal protein uL16 family. As to quaternary structure, part of the 50S ribosomal subunit.

Functionally, binds 23S rRNA and is also seen to make contacts with the A and possibly P site tRNAs. This Crocosphaera subtropica (strain ATCC 51142 / BH68) (Cyanothece sp. (strain ATCC 51142)) protein is Large ribosomal subunit protein uL16.